Reading from the N-terminus, the 401-residue chain is Argininosuccinate synthase (401 aa).

Position 9 to 17 (9 to 17 (AYSGGLDTS)) interacts with ATP. Tyr-88 serves as a coordination point for L-citrulline. Gly-118 provides a ligand contact to ATP. L-aspartate contacts are provided by Thr-120, Asn-124, and Asp-125. Residue Asn-124 coordinates L-citrulline. L-citrulline-binding residues include Arg-128, Ser-177, Ser-186, Glu-262, and Tyr-274.

Belongs to the argininosuccinate synthase family. Type 1 subfamily. Homotetramer.

It is found in the cytoplasm. It carries out the reaction L-citrulline + L-aspartate + ATP = 2-(N(omega)-L-arginino)succinate + AMP + diphosphate + H(+). The protein operates within amino-acid biosynthesis; L-arginine biosynthesis; L-arginine from L-ornithine and carbamoyl phosphate: step 2/3. The polypeptide is Argininosuccinate synthase (Chlorobaculum tepidum (strain ATCC 49652 / DSM 12025 / NBRC 103806 / TLS) (Chlorobium tepidum)).